A 185-amino-acid chain; its full sequence is Threonylcarbamoyl-AMP synthase (185 aa).

Positions 5-185 (NWRVRLAARI…RDGRTGQRLR (181 aa)) constitute a YrdC-like domain.

Belongs to the SUA5 family. TsaC subfamily.

The protein localises to the cytoplasm. It catalyses the reaction L-threonine + hydrogencarbonate + ATP = L-threonylcarbamoyladenylate + diphosphate + H2O. Required for the formation of a threonylcarbamoyl group on adenosine at position 37 (t(6)A37) in tRNAs that read codons beginning with adenine. Catalyzes the conversion of L-threonine, HCO(3)(-)/CO(2) and ATP to give threonylcarbamoyl-AMP (TC-AMP) as the acyladenylate intermediate, with the release of diphosphate. The polypeptide is Threonylcarbamoyl-AMP synthase (Nitrosococcus oceani (strain ATCC 19707 / BCRC 17464 / JCM 30415 / NCIMB 11848 / C-107)).